The chain runs to 486 residues: Protein nucleotidyltransferase YdiU (486 aa).

The ATP site is built by Gly90, Gly92, Arg93, Lys113, Asp125, Gly126, Arg176, and Arg183. Residue Asp252 is the Proton acceptor of the active site. Residues Asn253 and Asp262 each contribute to the Mg(2+) site. Asp262 provides a ligand contact to ATP.

The protein belongs to the SELO family. It depends on Mg(2+) as a cofactor. The cofactor is Mn(2+).

The enzyme catalyses L-seryl-[protein] + ATP = 3-O-(5'-adenylyl)-L-seryl-[protein] + diphosphate. The catalysed reaction is L-threonyl-[protein] + ATP = 3-O-(5'-adenylyl)-L-threonyl-[protein] + diphosphate. It catalyses the reaction L-tyrosyl-[protein] + ATP = O-(5'-adenylyl)-L-tyrosyl-[protein] + diphosphate. It carries out the reaction L-histidyl-[protein] + UTP = N(tele)-(5'-uridylyl)-L-histidyl-[protein] + diphosphate. The enzyme catalyses L-seryl-[protein] + UTP = O-(5'-uridylyl)-L-seryl-[protein] + diphosphate. The catalysed reaction is L-tyrosyl-[protein] + UTP = O-(5'-uridylyl)-L-tyrosyl-[protein] + diphosphate. Its function is as follows. Nucleotidyltransferase involved in the post-translational modification of proteins. It can catalyze the addition of adenosine monophosphate (AMP) or uridine monophosphate (UMP) to a protein, resulting in modifications known as AMPylation and UMPylation. The protein is Protein nucleotidyltransferase YdiU of Pseudomonas putida (strain W619).